We begin with the raw amino-acid sequence, 274 residues long: 4-diphosphocytidyl-2-C-methyl-D-erythritol kinase (274 aa).

Residue lysine 10 is part of the active site. 101-111 (PTQAGLGGGSA) serves as a coordination point for ATP. Residue aspartate 143 is part of the active site.

It belongs to the GHMP kinase family. IspE subfamily.

The catalysed reaction is 4-CDP-2-C-methyl-D-erythritol + ATP = 4-CDP-2-C-methyl-D-erythritol 2-phosphate + ADP + H(+). It functions in the pathway isoprenoid biosynthesis; isopentenyl diphosphate biosynthesis via DXP pathway; isopentenyl diphosphate from 1-deoxy-D-xylulose 5-phosphate: step 3/6. Catalyzes the phosphorylation of the position 2 hydroxy group of 4-diphosphocytidyl-2C-methyl-D-erythritol. In Helicobacter pylori (strain J99 / ATCC 700824) (Campylobacter pylori J99), this protein is 4-diphosphocytidyl-2-C-methyl-D-erythritol kinase.